We begin with the raw amino-acid sequence, 350 residues long: Dihydroorotate dehydrogenase (quinone) (350 aa).

Residues 67-71 (AGFDK) and glycine 91 each bind FMN. Lysine 71 is a substrate binding site. A substrate-binding site is contributed by 116 to 120 (NRMGF). FMN contacts are provided by asparagine 144 and asparagine 177. Asparagine 177 contacts substrate. Catalysis depends on serine 180, which acts as the Nucleophile. Residue asparagine 182 coordinates substrate. Residues lysine 213 and threonine 241 each coordinate FMN. Residue 242-243 (NT) participates in substrate binding. The tract at residues 249-268 (ASLHSDAADEEGGLSGAPIT) is disordered. Residues glycine 264, glycine 291, and 312–313 (YT) each bind FMN.

Belongs to the dihydroorotate dehydrogenase family. Type 2 subfamily. As to quaternary structure, monomer. FMN serves as cofactor.

Its subcellular location is the cell membrane. The enzyme catalyses (S)-dihydroorotate + a quinone = orotate + a quinol. The protein operates within pyrimidine metabolism; UMP biosynthesis via de novo pathway; orotate from (S)-dihydroorotate (quinone route): step 1/1. Functionally, catalyzes the conversion of dihydroorotate to orotate with quinone as electron acceptor. The protein is Dihydroorotate dehydrogenase (quinone) of Natronomonas pharaonis (strain ATCC 35678 / DSM 2160 / CIP 103997 / JCM 8858 / NBRC 14720 / NCIMB 2260 / Gabara) (Halobacterium pharaonis).